Consider the following 474-residue polypeptide: Vacuolar basic amino acid transporter 2 (474 aa).

Residues M1 to N33 are Cytoplasmic-facing. A helical membrane pass occupies residues C34 to N54. At I55–R62 the chain is on the vacuolar side. A helical membrane pass occupies residues A63–P85. Residues S86 to N97 are Cytoplasmic-facing. The chain crosses the membrane as a helical span at residues L98–I118. The Vacuolar portion of the chain corresponds to G119–R121. A helical membrane pass occupies residues W122–V142. At P143–D167 the chain is on the cytoplasmic side. Residues V168–G188 form a helical membrane-spanning segment. Residues C189–W196 lie on the Vacuolar side of the membrane. The helical transmembrane segment at T197–L217 threads the bilayer. At H218–S238 the chain is on the cytoplasmic side. Residues V239–L259 traverse the membrane as a helical segment. Topologically, residues P260–K273 are vacuolar. A helical membrane pass occupies residues A274 to F294. The Cytoplasmic segment spans residues S295–R303. A helical membrane pass occupies residues L304–E324. Residues K325–L331 are Vacuolar-facing. A helical membrane pass occupies residues I332–F352. Topologically, residues T353 to S375 are cytoplasmic. A helical membrane pass occupies residues I376–L396. The Vacuolar portion of the chain corresponds to L397–H447. N420 carries an N-linked (GlcNAc...) asparagine glycan. Residues L448–A468 form a helical membrane-spanning segment. Over K469–R474 the chain is Cytoplasmic.

It belongs to the major facilitator superfamily.

It is found in the vacuole membrane. Its function is as follows. Transporter required for vacuolar uptake of histidine, arginine and lysine and to a lesser extent tyrosine. This Saccharomyces cerevisiae (strain ATCC 204508 / S288c) (Baker's yeast) protein is Vacuolar basic amino acid transporter 2 (VBA2).